The chain runs to 793 residues: Probable serine/threonine-protein kinase fnkA (793 aa).

Positions 11-358 (WEILSQLGTG…IINLISHNFI (348 aa)) constitute a Protein kinase domain. ATP contacts are provided by residues 17–25 (LGTGAFGRV) and lysine 46. Aspartate 138 functions as the Proton acceptor in the catalytic mechanism. FNIP repeat units lie at residues 403–444 (FNQT…FGAR), 470–514 (YNQP…ILGD), 515–557 (YDQK…LGYR), 558–601 (FNKA…LGYC), and 691–733 (FIRP…LGSR).

Belongs to the protein kinase superfamily. STE Ser/Thr protein kinase family. Mg(2+) serves as cofactor.

The catalysed reaction is L-seryl-[protein] + ATP = O-phospho-L-seryl-[protein] + ADP + H(+). It carries out the reaction L-threonyl-[protein] + ATP = O-phospho-L-threonyl-[protein] + ADP + H(+). In Dictyostelium discoideum (Social amoeba), this protein is Probable serine/threonine-protein kinase fnkA.